Consider the following 202-residue polypeptide: Secreted RxLR effector protein 93 (202 aa).

The N-terminal stretch at 1–16 is a signal peptide; it reads MRFYLTKLFAAAGALA. Positions 29-58 are disordered; that stretch reads TPVSPLSRSSDHHQSDDSTQRRLRTLNGAD. Basic and acidic residues predominate over residues 37 to 48; sequence SSDHHQSDDSTQ. A RxLR-dEER motif is present at residues 49–61; the sequence is RRLRTLNGADEER.

The protein belongs to the RxLR effector family.

It localises to the secreted. The protein localises to the host nucleus. Its function is as follows. Secreted effector that completely suppresses the host cell death induced by cell death-inducing proteins. In Plasmopara viticola (Downy mildew of grapevine), this protein is Secreted RxLR effector protein 93.